The chain runs to 109 residues: Nucleoid-associated protein Sputw3181_1707 (109 aa).

This sequence belongs to the YbaB/EbfC family. In terms of assembly, homodimer.

It localises to the cytoplasm. The protein localises to the nucleoid. Functionally, binds to DNA and alters its conformation. May be involved in regulation of gene expression, nucleoid organization and DNA protection. This Shewanella sp. (strain W3-18-1) protein is Nucleoid-associated protein Sputw3181_1707.